A 466-amino-acid chain; its full sequence is Chromosomal replication initiator protein DnaA (466 aa).

Residues 1–86 (MSLSLWQQCL…EVGTKPVTQT (86 aa)) are domain I, interacts with DnaA modulators. A domain II region spans residues 86-129 (TLKTPVHNVVAPTQTTTAQPQRVAPAARSGWDNVPAPAEPTYRS). The domain III, AAA+ region stretch occupies residues 130 to 346 (NVNVKHTFDN…GALNRVIANA (217 aa)). Positions 174, 176, 177, and 178 each coordinate ATP. The segment at 347 to 466 (NFTGRAITID…FSNLIRTLSS (120 aa)) is domain IV, binds dsDNA.

It belongs to the DnaA family. As to quaternary structure, oligomerizes as a right-handed, spiral filament on DNA at oriC.

The protein resides in the cytoplasm. In terms of biological role, plays an essential role in the initiation and regulation of chromosomal replication. ATP-DnaA binds to the origin of replication (oriC) to initiate formation of the DNA replication initiation complex once per cell cycle. Binds the DnaA box (a 9 base pair repeat at the origin) and separates the double-stranded (ds)DNA. Forms a right-handed helical filament on oriC DNA; dsDNA binds to the exterior of the filament while single-stranded (ss)DNA is stabiized in the filament's interior. The ATP-DnaA-oriC complex binds and stabilizes one strand of the AT-rich DNA unwinding element (DUE), permitting loading of DNA polymerase. After initiation quickly degrades to an ADP-DnaA complex that is not apt for DNA replication. Binds acidic phospholipids. The polypeptide is Chromosomal replication initiator protein DnaA (Salmonella dublin (strain CT_02021853)).